The following is a 255-amino-acid chain: Hydroxyacylglutathione hydrolase (255 aa).

Zn(2+)-binding residues include histidine 59, histidine 61, aspartate 63, histidine 64, histidine 118, aspartate 144, and histidine 182.

Belongs to the metallo-beta-lactamase superfamily. Glyoxalase II family. As to quaternary structure, monomer. Zn(2+) is required as a cofactor.

It catalyses the reaction an S-(2-hydroxyacyl)glutathione + H2O = a 2-hydroxy carboxylate + glutathione + H(+). Its pathway is secondary metabolite metabolism; methylglyoxal degradation; (R)-lactate from methylglyoxal: step 2/2. Thiolesterase that catalyzes the hydrolysis of S-D-lactoyl-glutathione to form glutathione and D-lactic acid. In Synechococcus sp. (strain WH7803), this protein is Hydroxyacylglutathione hydrolase.